Here is a 348-residue protein sequence, read N- to C-terminus: Probable dual-specificity RNA methyltransferase RlmN (348 aa).

Residue Glu93 is the Proton acceptor of the active site. A Radical SAM core domain is found at 99 to 323 (TEKRLTACLS…QTRLSNSGIN (225 aa)). Cysteines 106 and 338 form a disulfide. 3 residues coordinate [4Fe-4S] cluster: Cys113, Cys117, and Cys120. S-adenosyl-L-methionine contacts are provided by residues 160–161 (GE), Ser190, 219–221 (SLH), and Asn295. Catalysis depends on Cys338, which acts as the S-methylcysteine intermediate.

The protein belongs to the radical SAM superfamily. RlmN family. [4Fe-4S] cluster is required as a cofactor.

Its subcellular location is the cytoplasm. It catalyses the reaction adenosine(2503) in 23S rRNA + 2 reduced [2Fe-2S]-[ferredoxin] + 2 S-adenosyl-L-methionine = 2-methyladenosine(2503) in 23S rRNA + 5'-deoxyadenosine + L-methionine + 2 oxidized [2Fe-2S]-[ferredoxin] + S-adenosyl-L-homocysteine. The enzyme catalyses adenosine(37) in tRNA + 2 reduced [2Fe-2S]-[ferredoxin] + 2 S-adenosyl-L-methionine = 2-methyladenosine(37) in tRNA + 5'-deoxyadenosine + L-methionine + 2 oxidized [2Fe-2S]-[ferredoxin] + S-adenosyl-L-homocysteine. Specifically methylates position 2 of adenine 2503 in 23S rRNA and position 2 of adenine 37 in tRNAs. This Prochlorococcus marinus subsp. pastoris (strain CCMP1986 / NIES-2087 / MED4) protein is Probable dual-specificity RNA methyltransferase RlmN.